Reading from the N-terminus, the 71-residue chain is Small ribosomal subunit protein bS21 (71 aa).

The segment covering 34–44 has biased composition (basic and acidic residues); it reads RREHYEKPTSE. Residues 34–71 form a disordered region; the sequence is RREHYEKPTSERKRKKAAAVKRHAKKLSRDNARRTRLY. Basic residues predominate over residues 45–59; it reads RKRKKAAAVKRHAKK. The segment covering 60–71 has biased composition (basic and acidic residues); the sequence is LSRDNARRTRLY.

Belongs to the bacterial ribosomal protein bS21 family.

The polypeptide is Small ribosomal subunit protein bS21 (Idiomarina loihiensis (strain ATCC BAA-735 / DSM 15497 / L2-TR)).